Consider the following 304-residue polypeptide: UDP-3-O-acyl-N-acetylglucosamine deacetylase (304 aa).

The Zn(2+) site is built by His-78, His-237, and Asp-241. Catalysis depends on His-264, which acts as the Proton donor.

Belongs to the LpxC family. It depends on Zn(2+) as a cofactor.

It catalyses the reaction a UDP-3-O-[(3R)-3-hydroxyacyl]-N-acetyl-alpha-D-glucosamine + H2O = a UDP-3-O-[(3R)-3-hydroxyacyl]-alpha-D-glucosamine + acetate. The protein operates within glycolipid biosynthesis; lipid IV(A) biosynthesis; lipid IV(A) from (3R)-3-hydroxytetradecanoyl-[acyl-carrier-protein] and UDP-N-acetyl-alpha-D-glucosamine: step 2/6. Functionally, catalyzes the hydrolysis of UDP-3-O-myristoyl-N-acetylglucosamine to form UDP-3-O-myristoylglucosamine and acetate, the committed step in lipid A biosynthesis. The chain is UDP-3-O-acyl-N-acetylglucosamine deacetylase from Polynucleobacter asymbioticus (strain DSM 18221 / CIP 109841 / QLW-P1DMWA-1) (Polynucleobacter necessarius subsp. asymbioticus).